Consider the following 346-residue polypeptide: L-glyceraldehyde 3-phosphate reductase (346 aa).

The NADP(+) site is built by W33, D61, Y66, S168, Q193, T223, L225, Q227, K233, S303, Q307, and N311.

The protein belongs to the shaker potassium channel beta subunit family.

The enzyme catalyses a primary alcohol + NADP(+) = an aldehyde + NADPH + H(+). Aldo-keto reductase that catalyzes the stereospecific, NADPH-dependent reduction of L-glyceraldehyde 3-phosphate (L-GAP) to L-glycerol 3-phosphate (L-G3P). The protein is L-glyceraldehyde 3-phosphate reductase of Escherichia coli O157:H7.